A 248-amino-acid polypeptide reads, in one-letter code: 4-hydroxy-tetrahydrodipicolinate reductase (248 aa).

Residues aspartate 32, 74 to 76 (GTT), and 99 to 102 (SANF) each bind NAD(+). The active-site Proton donor/acceptor is the histidine 134. Histidine 135 contacts (S)-2,3,4,5-tetrahydrodipicolinate. Catalysis depends on lysine 138, which acts as the Proton donor. Residue 144 to 145 (GT) participates in (S)-2,3,4,5-tetrahydrodipicolinate binding.

Belongs to the DapB family.

The protein localises to the cytoplasm. It carries out the reaction (S)-2,3,4,5-tetrahydrodipicolinate + NAD(+) + H2O = (2S,4S)-4-hydroxy-2,3,4,5-tetrahydrodipicolinate + NADH + H(+). The enzyme catalyses (S)-2,3,4,5-tetrahydrodipicolinate + NADP(+) + H2O = (2S,4S)-4-hydroxy-2,3,4,5-tetrahydrodipicolinate + NADPH + H(+). The protein operates within amino-acid biosynthesis; L-lysine biosynthesis via DAP pathway; (S)-tetrahydrodipicolinate from L-aspartate: step 4/4. In terms of biological role, catalyzes the conversion of 4-hydroxy-tetrahydrodipicolinate (HTPA) to tetrahydrodipicolinate. This Chlorobium limicola (strain DSM 245 / NBRC 103803 / 6330) protein is 4-hydroxy-tetrahydrodipicolinate reductase.